Here is a 414-residue protein sequence, read N- to C-terminus: 2-acylphloroglucinol 4-prenyltransferase (414 aa).

Residues 1 to 86 constitute a chloroplast transit peptide; it reads MELSSVSSFS…LKPLSIFSCK (86 aa). A run of 8 helical transmembrane segments spans residues 153-173, 201-221, 229-249, 256-276, 281-301, 336-356, 359-379, and 394-414; these read FSWP…GSCF, ISVE…FILI, LLTS…VPPF, ITAF…VYYA, LGLA…ITFM, LLGT…AIIW, AFKS…LFFQ, and KSFY…YLFI.

It belongs to the UbiA prenyltransferase family. In terms of assembly, component an active demethylxanthohumol (DMX) biosynthetic metabolon in glandular trichomes (lupulin glands) that encompasses a chalcone synthase (CHS) and a membrane-bound prenyltransferase. Interacts with PT2, forming a functional metabolon. Interacts with CHIL2; this interaction promotes catalytic activity. Mg(2+) is required as a cofactor. Expressed in trichomes.

The protein resides in the plastid. Its subcellular location is the chloroplast membrane. The enzyme catalyses 2',4,4',6'-tetrahydroxychalcone + dimethylallyl diphosphate = desmethylxanthohumol + diphosphate. It catalyses the reaction a 2-acylphloroglucinol + dimethylallyl diphosphate = a 2-acyl-4-prenylphloroglucinol + diphosphate. Its pathway is secondary metabolite biosynthesis. With respect to regulation, stimulated by CHIL2 but inhibited by CHIL1. Its function is as follows. Involved in the biosynthesis of prenylated phenolics natural products which contribute to the bitter taste of beer and display broad biological activities. Catalyzes the first prenylation step in the beta-bitter acid pathway. Uses dimethylallyl diphosphate (DMAPP) as the prenyl donor. The polypeptide is 2-acylphloroglucinol 4-prenyltransferase (Humulus lupulus (European hop)).